The primary structure comprises 239 residues: MVIKAQSPAGFAEEYIIESIWNNRFPPGSILPAERELSELIGVTRTTLREVLQRLARDGWLTIQHGKPTKVNNFWETSGLNILETLARLDHDSVPQLIDNLLAVRTNIATIFVRTAIRHHPEKAQEILARAKTVDDNAEAFTALDYGIFRGLAFASGNPIYGLILNGLKGLYTRVGRYYFSNPEARKLALTFYNKLSTLCDTESYDQVLECLRTYGKESGAIWHSMQGTMPSDLAEARR.

Positions 6 to 74 (QSPAGFAEEY…HGKPTKVNNF (69 aa)) constitute an HTH gntR-type domain. Residues 34-53 (ERELSELIGVTRTTLREVLQ) constitute a DNA-binding region (H-T-H motif).

As to quaternary structure, homodimer.

The protein localises to the cytoplasm. Its function is as follows. Multifunctional regulator of fatty acid metabolism. The chain is Fatty acid metabolism regulator protein from Yersinia pseudotuberculosis serotype O:1b (strain IP 31758).